Reading from the N-terminus, the 316-residue chain is NAC domain-containing protein 22 (316 aa).

Positions 17–170 (DLPGFRFHPT…DMVLCKIYRK (154 aa)) constitute an NAC domain. A DNA-binding region spans residues 117–176 (IGLKKTLVFYQGRAPRGTKTDWVMNEYRLPDYGAARAAAPPPKEDMVLCKIYRKATPLKE). The tract at residues 229 to 260 (QSSSSSAAPSGSSSKNGGAGAPREAKKEEADV) is disordered. Over residues 230–244 (SSSSSAAPSGSSSKN) the composition is skewed to low complexity.

It is found in the nucleus. Its function is as follows. Transcription activator that binds sequence-specific DNA motifs. Involved in stress response. Plays a positive role in drought and salt stress tolerance through the modulation of abscisic acid-mediated signaling. In Oryza sativa subsp. japonica (Rice), this protein is NAC domain-containing protein 22.